The sequence spans 312 residues: Glyoxylate/hydroxypyruvate reductase A (312 aa).

Residue Arg-227 is part of the active site. His-275 acts as the Proton donor in catalysis.

Belongs to the D-isomer specific 2-hydroxyacid dehydrogenase family. GhrA subfamily.

It is found in the cytoplasm. It catalyses the reaction glycolate + NADP(+) = glyoxylate + NADPH + H(+). It carries out the reaction (R)-glycerate + NAD(+) = 3-hydroxypyruvate + NADH + H(+). The enzyme catalyses (R)-glycerate + NADP(+) = 3-hydroxypyruvate + NADPH + H(+). Catalyzes the NADPH-dependent reduction of glyoxylate and hydroxypyruvate into glycolate and glycerate, respectively. The sequence is that of Glyoxylate/hydroxypyruvate reductase A from Enterobacter sp. (strain 638).